Reading from the N-terminus, the 49-residue chain is MYKLWLLFDPRRTLVALSAFLFVLGLIIHFISLSTDRFNWLEGKPAVRA.

Residues 1–12 are Cytoplasmic-facing; that stretch reads MYKLWLLFDPRR. A helical transmembrane segment spans residues 13-33; that stretch reads TLVALSAFLFVLGLIIHFISL. His-29 contacts a bacteriochlorophyll. The Periplasmic portion of the chain corresponds to 34-49; the sequence is STDRFNWLEGKPAVRA.

It belongs to the antenna complex alpha subunit family. As to quaternary structure, the core complex is formed by different alpha and beta chains, binding bacteriochlorophyll molecules, and arranged most probably in tetrameric structures disposed around the reaction center. The non-pigmented gamma chains may constitute additional components.

It localises to the cell inner membrane. Antenna complexes are light-harvesting systems, which transfer the excitation energy to the reaction centers. This Rhodoblastus acidophilus (Rhodopseudomonas acidophila) protein is Light-harvesting protein B-880 alpha chain.